The following is a 291-amino-acid chain: ATP phosphoribosyltransferase 1 (291 aa).

It belongs to the ATP phosphoribosyltransferase family. Long subfamily. Mg(2+) serves as cofactor.

Its subcellular location is the cytoplasm. It carries out the reaction 1-(5-phospho-beta-D-ribosyl)-ATP + diphosphate = 5-phospho-alpha-D-ribose 1-diphosphate + ATP. Its pathway is amino-acid biosynthesis; L-histidine biosynthesis; L-histidine from 5-phospho-alpha-D-ribose 1-diphosphate: step 1/9. Feedback inhibited by histidine. In terms of biological role, catalyzes the condensation of ATP and 5-phosphoribose 1-diphosphate to form N'-(5'-phosphoribosyl)-ATP (PR-ATP). Has a crucial role in the pathway because the rate of histidine biosynthesis seems to be controlled primarily by regulation of HisG enzymatic activity. In Geobacter sulfurreducens (strain ATCC 51573 / DSM 12127 / PCA), this protein is ATP phosphoribosyltransferase 1.